The sequence spans 131 residues: Small ribosomal subunit protein uS8 (131 aa).

The protein belongs to the universal ribosomal protein uS8 family. Part of the 30S ribosomal subunit. Contacts proteins S5 and S12.

Its function is as follows. One of the primary rRNA binding proteins, it binds directly to 16S rRNA central domain where it helps coordinate assembly of the platform of the 30S subunit. This is Small ribosomal subunit protein uS8 from Ruminiclostridium cellulolyticum (strain ATCC 35319 / DSM 5812 / JCM 6584 / H10) (Clostridium cellulolyticum).